The following is a 290-amino-acid chain: Pre-mRNA-splicing factor cwf20 (290 aa).

Disordered regions lie at residues 1-61 and 114-134; these read MSLV…KSSF and PNNS…KKST. The segment covering 114–128 has biased composition (polar residues); that stretch reads PNNSVSDLTSTGSSE.

In terms of assembly, belongs to the 40S cdc5-associated complex (or cwf complex), a spliceosome sub-complex reminiscent of a late-stage spliceosome composed of the U2, U5 and U6 snRNAs and at least brr2, cdc5, cwf2/prp3, cwf3/syf1, cwf4/syf3, cwf5/ecm2, spp42/cwf6, cwf7/spf27, cwf8, cwf9, cwf10, cwf11, cwf12, prp45/cwf13, cwf14, cwf15, cwf16, cwf17, cwf18, cwf19, cwf20, cwf21, cwf22, cwf23, cwf24, cwf25, cwf26, cyp7/cwf27, cwf28, cwf29/ist3, lea1, msl1, prp5/cwf1, prp10, prp12/sap130, prp17, prp22, sap61, sap62, sap114, sap145, slu7, smb1, smd1, smd3, smf1, smg1 and syf2.

The protein localises to the nucleus. Functionally, involved in mRNA splicing where it associates with cdc5 and the other cwf proteins as part of the spliceosome. This Schizosaccharomyces pombe (strain 972 / ATCC 24843) (Fission yeast) protein is Pre-mRNA-splicing factor cwf20 (cwf20).